Reading from the N-terminus, the 324-residue chain is Putative transcription factor sel-7 (324 aa).

Over residues 67-85 (SPPQTVISEAPPQSFTPSA) the composition is skewed to polar residues. Residues 67–151 (SPPQTVISEA…DEKVLADGPF (85 aa)) form a disordered region. Residues 86-98 (TNSTSDKTSSSLK) are compositionally biased toward low complexity. Acidic residues predominate over residues 106-123 (SDGDLDMEGEEDTEELFD). A compositionally biased stretch (polar residues) spans 124–133 (NESQPSQRNQ). Basic and acidic residues predominate over residues 134 to 146 (SPKETEVEDEKVL).

Multimer. May interact with mediator complex subunit mdt-29. In terms of tissue distribution, widely expressed, including in pharyngeal muscle cells and body wall muscle cells.

It localises to the nucleus. Its function is as follows. Putative transcription factor. Positive regulator of the lin-12/Notch signaling pathway. Binds to specific DNA sequences in regulatory elements. Involved in cell fate decisions that require cell-cell interactions, such as the anchor cell (AC) / ventral uterine (VU) precursor cell fate decision. Heterochronic protein which controls the choice of stage specific cell fates, including the larval L3 stage-specific fate of seam cells. Involved in regulating the temporal expression pattern of hunchback-like protein hbl-1, thereby playing a role in the progression between larval stages L2 and L3. This Caenorhabditis elegans protein is Putative transcription factor sel-7.